The following is a 640-amino-acid chain: uncharacterized protein (640 aa).

The segment at 594-614 (QCSSDHCKPGSSETLPEATNE) is disordered.

This is an uncharacterized protein from Rattus norvegicus (Rat).